The chain runs to 421 residues: MSKTHLTEQKFSDFSLHPKVVEALEKKGFHNCTPIQALALPLTLAGRDVAGQAQTGTGKTMAFLTSMFHYLLSHPAIADRKVNKPRALIMAPTRELAVQIHADAEPLAEATGLKLGLAYGGDGYDKQLKVLESGVDILIGTTGRLIDYAKQNHINLGAIQVVVLDEADRMYDLGFIKDIRWLFRRMPPANQRLNMLFSATLSYRVRELAFEQMNNAEYIEVEPEQKTGHRIKEELFYPSNEEKMRLLQTLIEEEWPDRAIIFANTKHRCEEIWGHLAADGHRVGLLTGDVAQKKRLRILDEFTRGDLDILVATDVAARGLHIPAVTHVFNYDLPDDCEDYVHRIGRTGRAGASGHSISLACEEYALNLPAIETYIGHSIPVSKYNPDALMTDLPKPLRLTRPRTGNGPRRTGAPRNRRRSG.

The Q motif signature appears at 9 to 37 (QKFSDFSLHPKVVEALEKKGFHNCTPIQA). In terms of domain architecture, Helicase ATP-binding spans 40 to 219 (LPLTLAGRDV…FEQMNNAEYI (180 aa)). 53 to 60 (AQTGTGKT) contacts ATP. The short motif at 165–168 (DEAD) is the DEAD box element. The region spanning 245–390 (RLLQTLIEEE…VSKYNPDALM (146 aa)) is the Helicase C-terminal domain. The interval 392–421 (DLPKPLRLTRPRTGNGPRRTGAPRNRRRSG) is disordered. Positions 402–414 (PRTGNGPRRTGAP) are enriched in low complexity.

This sequence belongs to the DEAD box helicase family. RhlB subfamily. As to quaternary structure, component of the RNA degradosome, which is a multiprotein complex involved in RNA processing and mRNA degradation.

The protein localises to the cytoplasm. It catalyses the reaction ATP + H2O = ADP + phosphate + H(+). DEAD-box RNA helicase involved in RNA degradation. Has RNA-dependent ATPase activity and unwinds double-stranded RNA. The polypeptide is ATP-dependent RNA helicase RhlB (Shigella dysenteriae serotype 1 (strain Sd197)).